The following is a 398-amino-acid chain: 4-hydroxy-3-methylbut-2-enyl diphosphate reductase (398 aa).

Cysteine 66 provides a ligand contact to [4Fe-4S] cluster. Residue histidine 96 coordinates (2E)-4-hydroxy-3-methylbut-2-enyl diphosphate. Histidine 96 contacts dimethylallyl diphosphate. An isopentenyl diphosphate-binding site is contributed by histidine 96. [4Fe-4S] cluster is bound at residue cysteine 157. (2E)-4-hydroxy-3-methylbut-2-enyl diphosphate is bound at residue histidine 185. A dimethylallyl diphosphate-binding site is contributed by histidine 185. Histidine 185 is a binding site for isopentenyl diphosphate. The Proton donor role is filled by glutamate 187. Threonine 250 serves as a coordination point for (2E)-4-hydroxy-3-methylbut-2-enyl diphosphate. Cysteine 288 is a binding site for [4Fe-4S] cluster. Positions 317, 318, 319, and 380 each coordinate (2E)-4-hydroxy-3-methylbut-2-enyl diphosphate. Residues serine 317, serine 318, asparagine 319, and serine 380 each contribute to the dimethylallyl diphosphate site. The isopentenyl diphosphate site is built by serine 317, serine 318, asparagine 319, and serine 380.

This sequence belongs to the IspH family. It depends on [4Fe-4S] cluster as a cofactor.

The enzyme catalyses isopentenyl diphosphate + 2 oxidized [2Fe-2S]-[ferredoxin] + H2O = (2E)-4-hydroxy-3-methylbut-2-enyl diphosphate + 2 reduced [2Fe-2S]-[ferredoxin] + 2 H(+). It carries out the reaction dimethylallyl diphosphate + 2 oxidized [2Fe-2S]-[ferredoxin] + H2O = (2E)-4-hydroxy-3-methylbut-2-enyl diphosphate + 2 reduced [2Fe-2S]-[ferredoxin] + 2 H(+). It participates in isoprenoid biosynthesis; dimethylallyl diphosphate biosynthesis; dimethylallyl diphosphate from (2E)-4-hydroxy-3-methylbutenyl diphosphate: step 1/1. Its pathway is isoprenoid biosynthesis; isopentenyl diphosphate biosynthesis via DXP pathway; isopentenyl diphosphate from 1-deoxy-D-xylulose 5-phosphate: step 6/6. Its function is as follows. Catalyzes the conversion of 1-hydroxy-2-methyl-2-(E)-butenyl 4-diphosphate (HMBPP) into a mixture of isopentenyl diphosphate (IPP) and dimethylallyl diphosphate (DMAPP). Acts in the terminal step of the DOXP/MEP pathway for isoprenoid precursor biosynthesis. The chain is 4-hydroxy-3-methylbut-2-enyl diphosphate reductase from Prochlorococcus marinus subsp. pastoris (strain CCMP1986 / NIES-2087 / MED4).